The sequence spans 730 residues: Kinesin-like protein KIF2C (730 aa).

The interval 1 to 256 is globular; that stretch reads MERLVATRLV…MDCHRISMAD (256 aa). The segment at 79-98 is disordered; that stretch reads NMPPQRNVSSQNHKRKTISK. The negative regulator of microtubule-binding stretch occupies residues 211–242; that stretch reads EQRAQNYERRMKRAQDYDTSVPNWEFGKMIKE. One can recognise a Kinesin motor domain in the interval 262 to 592; the sequence is RICVCVRKRP…LRYADRVKEL (331 aa). ATP contacts are provided by residues Arg-268 and 352–359; that span reads GQTGSGKT. The stretch at 599–730 forms a coiled coil; sequence TNDDNLQMED…QISKKKRSNK (132 aa).

Belongs to the TRAFAC class myosin-kinesin ATPase superfamily. Kinesin family. MCAK/KIF2 subfamily.

It is found in the cytoplasm. Its subcellular location is the cytoskeleton. It localises to the nucleus. The protein localises to the chromosome. The protein resides in the centromere. It is found in the kinetochore. Promotes ATP-dependent removal of tubulin dimers from microtubules. Regulates the turnover of microtubules at the kinetochore and functions in chromosome segregation during mitosis. May play a role in chromosome congression and may be required for the lateral to end-on conversion of the chromosome-microtubule attachment. The chain is Kinesin-like protein KIF2C (kif2c) from Xenopus laevis (African clawed frog).